The following is a 289-amino-acid chain: D-psicose 3-epimerase (289 aa).

Tyr6 and Ala107 together coordinate substrate. Glu150 serves as the catalytic Proton donor/acceptor. Glu150 serves as a coordination point for Mn(2+). Residues Glu156 and Asp183–His186 each bind substrate. Asp183 and His209 together coordinate Mn(2+). Arg215 is a substrate binding site. The active-site Proton donor/acceptor is Glu244. A Mn(2+)-binding site is contributed by Glu244.

This sequence belongs to the hyi family. As to quaternary structure, homotetramer. It depends on Mn(2+) as a cofactor. The cofactor is Co(2+).

It carries out the reaction D-allulose = keto-D-fructose. With respect to regulation, inhibited by Zn(2+) and Cu(2+). Involved in the biosynthesis of D-psicose. Catalyzes the reversible epimerization of D-fructose at the C3 position to yield D-psicose. The enzyme is highly specific for D-psicose and shows very low activity with D-tagatose. The substrate specificity decreases in the following order: D-fructose, D-tagatose, D-ribulose, D-xylulose, and D-sorbose. It shows a higher level of activity for cis ketoses than for trans-ketoses. The chain is D-psicose 3-epimerase (dpe) from Agrobacterium fabrum (strain C58 / ATCC 33970) (Agrobacterium tumefaciens (strain C58)).